The sequence spans 718 residues: SANT and BTB domain regulator of class switch recombination (718 aa).

One can recognise an SANT domain in the interval 21-59 (DMILYPLIGIPQTINWETIARLVPGLTPKECAKRFDELK). The span at 118–134 (ASTRNCSSESENCTTHN) shows a compositional bias: polar residues. Residues 118 to 142 (ASTRNCSSESENCTTHNGGEMTEES) form a disordered region. The BTB domain maps to 147 to 255 (MVIHVCDEAK…QCIQYCHKNM (109 aa)). Residues 555-576 (SEEEEYTTGSEVTEDEVGDEEE) show a composition bias toward acidic residues. 2 disordered regions span residues 555–622 (SEEE…SPFV) and 692–718 (SVPVSARQSSSEKNTRSKSRFGQGRPA). Residues 580–595 (KQRKKEKPKKFTRQPK) show a composition bias toward basic residues. A compositionally biased stretch (basic and acidic residues) spans 604-615 (QRKEKALEKSAS).

It belongs to the KIAA1841 family. In terms of assembly, homodimer. Interacts (via the BTB domain) with HDAC1 and NCOR2.

Its function is as follows. Negatively regulates class switch recombination or isotype switching in splenic B-cells. This chain is SANT and BTB domain regulator of class switch recombination, found in Homo sapiens (Human).